A 333-amino-acid chain; its full sequence is Fibronectin type III domain-containing protein 11 (333 aa).

Positions 212-310 constitute a Fibronectin type-III domain; it reads PVMFDRKESV…DSLTLHTRPG (99 aa). The disordered stretch occupies residues 307–333; it reads TRPGPPEGLAPSRLGKLGLSLTTPSER.

This Bos taurus (Bovine) protein is Fibronectin type III domain-containing protein 11.